The primary structure comprises 197 residues: Probable adenylyl-sulfate kinase (197 aa).

33 to 40 (GLSGSGKS) is a binding site for ATP. The Phosphoserine intermediate role is filled by Ser107.

This sequence belongs to the APS kinase family.

The enzyme catalyses adenosine 5'-phosphosulfate + ATP = 3'-phosphoadenylyl sulfate + ADP + H(+). It participates in sulfur metabolism; hydrogen sulfide biosynthesis; sulfite from sulfate: step 2/3. In terms of biological role, catalyzes the synthesis of activated sulfate. The protein is Probable adenylyl-sulfate kinase (cysC) of Bacillus subtilis (strain 168).